The primary structure comprises 487 residues: GTPase Der (487 aa).

Residues 1–20 are disordered; sequence MAKAVRKSNSEETVPIKAPR. EngA-type G domains are found at residues 28–197 and 225–401; these read PVVS…SSKP and FRLA…SRSR. GTP-binding positions include 34–41, 83–87, 149–152, 231–238, 278–282, and 343–346; these read GRQNVGKS, DTPGL, NKAD, GKPNSGKS, DTAGI, and NKWD. Positions 402–486 constitute a KH-like domain; the sequence is RKVSTSELNK…PVRLEFRSDR (85 aa).

It belongs to the TRAFAC class TrmE-Era-EngA-EngB-Septin-like GTPase superfamily. EngA (Der) GTPase family. As to quaternary structure, associates with the 50S ribosomal subunit.

Its function is as follows. GTPase that plays an essential role in the late steps of ribosome biogenesis. The protein is GTPase Der of Leptospira borgpetersenii serovar Hardjo-bovis (strain L550).